Consider the following 184-residue polypeptide: ATP synthase subunit b (184 aa).

A helical membrane pass occupies residues 4-24 (LSVLFALVASPALAASGPFFS).

This sequence belongs to the ATPase B chain family. As to quaternary structure, F-type ATPases have 2 components, F(1) - the catalytic core - and F(0) - the membrane proton channel. F(1) has five subunits: alpha(3), beta(3), gamma(1), delta(1), epsilon(1). F(0) has three main subunits: a(1), b(2) and c(10-14). The alpha and beta chains form an alternating ring which encloses part of the gamma chain. F(1) is attached to F(0) by a central stalk formed by the gamma and epsilon chains, while a peripheral stalk is formed by the delta and b chains.

It is found in the cell inner membrane. Functionally, f(1)F(0) ATP synthase produces ATP from ADP in the presence of a proton or sodium gradient. F-type ATPases consist of two structural domains, F(1) containing the extramembraneous catalytic core and F(0) containing the membrane proton channel, linked together by a central stalk and a peripheral stalk. During catalysis, ATP synthesis in the catalytic domain of F(1) is coupled via a rotary mechanism of the central stalk subunits to proton translocation. Component of the F(0) channel, it forms part of the peripheral stalk, linking F(1) to F(0). The polypeptide is ATP synthase subunit b (Paracoccus denitrificans (strain Pd 1222)).